Here is a 346-residue protein sequence, read N- to C-terminus: Biotin synthase (346 aa).

The Radical SAM core domain occupies 38–256; it reads KQIQVSTLLS…IAVARIMMPT (219 aa). [4Fe-4S] cluster contacts are provided by Cys53, Cys57, and Cys60. [2Fe-2S] cluster is bound by residues Cys97, Cys128, Cys188, and Arg260.

It belongs to the radical SAM superfamily. Biotin synthase family. As to quaternary structure, homodimer. Requires [4Fe-4S] cluster as cofactor. The cofactor is [2Fe-2S] cluster.

It carries out the reaction (4R,5S)-dethiobiotin + (sulfur carrier)-SH + 2 reduced [2Fe-2S]-[ferredoxin] + 2 S-adenosyl-L-methionine = (sulfur carrier)-H + biotin + 2 5'-deoxyadenosine + 2 L-methionine + 2 oxidized [2Fe-2S]-[ferredoxin]. It participates in cofactor biosynthesis; biotin biosynthesis; biotin from 7,8-diaminononanoate: step 2/2. In terms of biological role, catalyzes the conversion of dethiobiotin (DTB) to biotin by the insertion of a sulfur atom into dethiobiotin via a radical-based mechanism. This Salmonella arizonae (strain ATCC BAA-731 / CDC346-86 / RSK2980) protein is Biotin synthase.